We begin with the raw amino-acid sequence, 345 residues long: Phosphoribosylformylglycinamidine cyclo-ligase (345 aa).

This sequence belongs to the AIR synthase family.

It is found in the cytoplasm. It catalyses the reaction 2-formamido-N(1)-(5-O-phospho-beta-D-ribosyl)acetamidine + ATP = 5-amino-1-(5-phospho-beta-D-ribosyl)imidazole + ADP + phosphate + H(+). It functions in the pathway purine metabolism; IMP biosynthesis via de novo pathway; 5-amino-1-(5-phospho-D-ribosyl)imidazole from N(2)-formyl-N(1)-(5-phospho-D-ribosyl)glycinamide: step 2/2. The sequence is that of Phosphoribosylformylglycinamidine cyclo-ligase from Escherichia coli O7:K1 (strain IAI39 / ExPEC).